Consider the following 183-residue polypeptide: Cell division protein SepF (183 aa).

Positions 13–58 are disordered; sequence MHDDDDFDDDYEDYDDDFDEDYEDDKPSARKRLFTGSSKKDSVADE. The span at 16 to 36 shows a compositional bias: acidic residues; it reads DDDFDDDYEDYDDDFDEDYED.

It belongs to the SepF family. As to quaternary structure, homodimer. Interacts with FtsZ.

Its subcellular location is the cytoplasm. In terms of biological role, cell division protein that is part of the divisome complex and is recruited early to the Z-ring. Probably stimulates Z-ring formation, perhaps through the cross-linking of FtsZ protofilaments. Its function overlaps with FtsA. This Lachnospira eligens (strain ATCC 27750 / DSM 3376 / VPI C15-48 / C15-B4) (Eubacterium eligens) protein is Cell division protein SepF.